The chain runs to 397 residues: MNENIAEKFRADGVARPNWSAVFAVAFCVACLITVEFLPVSLLTPMAQDLGISEGVAGQSVTVTAFVAMFSSLFITQIIQATDRRYIVILFAVLLTASCLMVSFANSFTLLLLGRACLGLALGGFWAMSASLTMRLVPARTVPKALSVIFGAVSIALVIAAPLGSFLGGIIGWRNVFNAAAVMGVLCVIWVVKSLPSLPGEPSHQKQNMFSLLQRPGVMAGMIAIFMSFAGQFAFFTYIRPVYMNLAGFDVDGLTLVLLSFGIASFVGTSFSSYVLKRSVKLALAGAPLLLALSALTLIVWGSDKTVAAVIAIIWGLAFALVPVGWSTWITRSLADQAEKAGSIQVAVIQLANTCGAAVGGYALDNFGLLSPLALSGGLMLLTALVVAAKVRITPMS.

Topologically, residues 1–21 (MNENIAEKFRADGVARPNWSA) are cytoplasmic. The helical transmembrane segment at 22 to 42 (VFAVAFCVACLITVEFLPVSL) threads the bilayer. The Periplasmic portion of the chain corresponds to 43–54 (LTPMAQDLGISE). Residues 55 to 75 (GVAGQSVTVTAFVAMFSSLFI) form a helical membrane-spanning segment. At 76–85 (TQIIQATDRR) the chain is on the cytoplasmic side. A helical transmembrane segment spans residues 86 to 106 (YIVILFAVLLTASCLMVSFAN). Position 107 (Ser-107) is a topological domain, periplasmic. The chain crosses the membrane as a helical span at residues 108 to 128 (FTLLLLGRACLGLALGGFWAM). Topologically, residues 129–147 (SASLTMRLVPARTVPKALS) are cytoplasmic. The helical transmembrane segment at 148–168 (VIFGAVSIALVIAAPLGSFLG) threads the bilayer. At 169 to 175 (GIIGWRN) the chain is on the periplasmic side. The helical transmembrane segment at 176-196 (VFNAAAVMGVLCVIWVVKSLP) threads the bilayer. At 197–215 (SLPGEPSHQKQNMFSLLQR) the chain is on the cytoplasmic side. A helical transmembrane segment spans residues 216 to 236 (PGVMAGMIAIFMSFAGQFAFF). Residues 237–255 (TYIRPVYMNLAGFDVDGLT) lie on the Periplasmic side of the membrane. Residues 256-276 (LVLLSFGIASFVGTSFSSYVL) traverse the membrane as a helical segment. At 277-281 (KRSVK) the chain is on the cytoplasmic side. Residues 282–302 (LALAGAPLLLALSALTLIVWG) traverse the membrane as a helical segment. Residues 303 to 305 (SDK) lie on the Periplasmic side of the membrane. A helical membrane pass occupies residues 306–326 (TVAAVIAIIWGLAFALVPVGW). Over 327-343 (STWITRSLADQAEKAGS) the chain is Cytoplasmic. A helical transmembrane segment spans residues 344-364 (IQVAVIQLANTCGAAVGGYAL). At 365 to 366 (DN) the chain is on the periplasmic side. A helical transmembrane segment spans residues 367 to 387 (FGLLSPLALSGGLMLLTALVV). The Cytoplasmic segment spans residues 388–397 (AAKVRITPMS).

This sequence belongs to the major facilitator superfamily. DHA1 family. NepI (TC 2.A.1.2.26) subfamily.

The protein localises to the cell inner membrane. The catalysed reaction is inosine(in) + H(+)(out) = inosine(out) + H(+)(in). It catalyses the reaction guanosine(in) + H(+)(out) = guanosine(out) + H(+)(in). Its function is as follows. Involved in the efflux of purine ribonucleosides, such as inosine and guanosine. In Salmonella paratyphi B (strain ATCC BAA-1250 / SPB7), this protein is Purine ribonucleoside efflux pump NepI.